The primary structure comprises 116 residues: G antigen 2D (116 aa).

The disordered stretch occupies residues Met-1–Cys-116. 2 stretches are compositionally biased toward acidic residues: residues Phe-31–Glu-44 and Glu-86–Glu-95. Over residues Glu-102 to Cys-116 the composition is skewed to basic and acidic residues.

The protein belongs to the GAGE family. Not expressed in normal tissues, except in testis, but expressed by a large proportion of tumors of various histological origins.

The protein is G antigen 2D (GAGE2D) of Homo sapiens (Human).